Consider the following 356-residue polypeptide: Decorin (356 aa).

The first 15 residues, 1 to 15 (MRLVLFILLLPVCLA), serve as a signal peptide directing secretion. Positions 16 to 29 (TPFHQKGLFDFMLE) are excised as a propeptide. S45 carries an O-linked (Xyl...) (glycosaminoglycan) serine glycan. Cystine bridges form between C51–C57 and C55–C64. 12 LRR repeats span residues 70–90 (ERVP…NNKI), 91–114 (TEIR…NNKI), 115–138 (SKIS…KNNL), 139–159 (KELP…ENEI), 160–183 (SKLR…TNPL), 184–209 (KSSG…DTNI), 210–230 (TSIP…GNKI), 231–254 (SKID…FNSI), 255–278 (SSVE…NNEL), 279–301 (VRVP…NNKI), 302–331 (ASIG…SNPV), and 332–356 (QYWE…GNYK). N-linked (GlcNAc...) asparagine glycosylation is present at N208. The N-linked (GlcNAc...) asparagine glycan is linked to N259. C310 and C343 are disulfide-bonded.

Belongs to the small leucine-rich proteoglycan (SLRP) family. SLRP class I subfamily. Binds to type I and type II collagen, to fibronectin and TGF-beta. Forms a ternary complex with MFAP2 and ELN. Post-translationally, the attached glycosaminoglycan chain can be either chondroitin sulfate or dermatan sulfate depending upon the tissue of origin.

It localises to the secreted. It is found in the extracellular space. The protein resides in the extracellular matrix. In terms of biological role, may affect the rate of fibrils formation. This Coturnix japonica (Japanese quail) protein is Decorin (DCN).